The primary structure comprises 553 residues: MSSVLKAFERFTIEQELQDRGEEGSIPPETLKSAVKVFVINTPNPTTRYQMLNFCLRIICSQNRRASHRVGALIALFSLPSAGMQNHIRLADRSPEAQIERCEIDGFEPGTYRLIPNARANLTANEIAAYALLADDLPPTINNGTPYVHADVELQPCDEIEQFLDRCYSVLIQAWVMVCKCMTAYDQPAGSADRRFAKYQQQGRLEARYMLQPEAQRLIQTAIRKSLVVRQYLTFELQLARRQGLLSNRYYAMVGDIGKYIENSGLTAFFLTLKYALGTKWSPLSLAAFTGELTKLRSLMMLYRDIGEQARYLALLEAPQIMDFAPGGYPLIFSYAMGVGSVLDVQMRNYTYARPFLNGYYFQIGVETARRQQGTVDNRVADDLGLTPEQRNEVTQLVDRLARGRGAGIPGGPVNPFVPPVQQQQPAAVYADIPALEESDDDGDEDGGAGFQNGVQVPAVRQGGQTDFRAQPLQDPIQAQLFMPLYPQVSNIPNNRIIRSIASGGWKTKIYYDTTRMVILNKMQGANTETLSQTIPIKTHSCKWATGMSKSLT.

The interval 1–398 (MSSVLKAFER…EQRNEVTQLV (398 aa)) is p protein-binding. Residues Lys-180, Arg-195, Tyr-260, Tyr-350, and Arg-354 each coordinate RNA. Residues 405–553 (RGAGIPGGPV…WATGMSKSLT (149 aa)) form a ntail region. Ser-439 carries the post-translational modification Phosphoserine.

It belongs to the paramyxoviruses nucleocapsid family. In terms of assembly, homomultimer; forms the nucleocapsid. Binds to the viral genomic RNA. N0 interacts with the phosphoprotein (via N-terminus); this interaction allows P to chaperon N0 to avoid N polymerization before encapsidation. Interacts (via N-terminus) as N-RNA template with the phosphoprotein (via C-terminus); this interaction positions the polymerase on the template.

The protein localises to the virion. It is found in the host cytoplasm. Its function is as follows. Forms the helical nucleocapsid (NC) with 12.71 N subunits per helical turn and a rise of 5.3 Angstrom per N subunit, protecting the genome from nucleases. The encapsidated genomic RNA serves as template for transcription and replication; encapsidation by N is coupled to RNA synthesis. Forms the encapsidation complex with the phosphoprotein protein P. Before encapsidation, the newly synthesized free N protein, so-called N0, is chaperoned by P. The chain is Nucleoprotein (N) from Homo sapiens (Human).